A 155-amino-acid polypeptide reads, in one-letter code: uncharacterized protein (155 aa).

Disordered regions lie at residues 1–22 (MSSQ…TFTF) and 108–155 (PFNK…DTQA). Serine 2 is subject to N-acetylserine. Serine 136, serine 144, and serine 146 each carry phosphoserine. The span at 136–155 (SDEDLDAESDSEGEDEDTQA) shows a compositional bias: acidic residues.

This is an uncharacterized protein from Rattus norvegicus (Rat).